The primary structure comprises 511 residues: Inner membrane ABC transporter permease protein YnjC (511 aa).

Over 1–8 (MATPLRYA) the chain is Cytoplasmic. Residues 9-29 (LIFLLWAMVAVIYAPLIPAAL) traverse the membrane as a helical segment. Over 30–62 (TLISPALSLTHWQALFADPQLPQALLATLVSTT) the chain is Periplasmic. One can recognise an ABC transmembrane type-1 1 domain in the interval 54-255 (LLATLVSTTI…MLLLAAYVLL (202 aa)). Residues 63–83 (IAAVGALLIALLVIVALWPGP) traverse the membrane as a helical segment. Topologically, residues 84–91 (KWQRMCAR) are cytoplasmic. The chain crosses the membrane as a helical span at residues 92-112 (LPWLLAIPHVAFATSALLLFA). At 113-130 (DGGLLYDYFPYFTPPMDR) the chain is on the periplasmic side. The chain crosses the membrane as a helical span at residues 131–151 (FGIGLGLTLAVKESAFLLWIL). At 152–189 (AAVLSEKWLLQQVIVLDSLGYSRWQCLNWLLLPSVAPA) the chain is on the cytoplasmic side. The chain crosses the membrane as a helical span at residues 190–210 (LAMAMLAIVAWSLSVVDVAII). The Periplasmic portion of the chain corresponds to 211 to 239 (LGPGNPPTLAVISWQWLTQGDIDQQTKGA). A helical membrane pass occupies residues 240–260 (LASLLLMLLLAAYVLLSYLLW). The Cytoplasmic segment spans residues 261–284 (RSWRRTIPRVDGVRKPATPLLPGN). A helical membrane pass occupies residues 285–305 (TLAIFLPLTGVLCVVLLAILA). Topologically, residues 306–318 (DQSTINSEALINS) are periplasmic. The ABC transmembrane type-1 2 domain maps to 315–496 (LINSLTMGLV…LLPLIIFALT (182 aa)). Residues 319-339 (LTMGLVATFIALLLLLLWLEW) form a helical membrane-spanning segment. Residues 340–345 (GPQRRQ) lie on the Cytoplasmic side of the membrane. The chain crosses the membrane as a helical span at residues 346–366 (LWLWLPILLPALPLVAGQYTL). Residues 367–374 (ALWLKLDG) are Periplasmic-facing. Residues 375-395 (SWTAVVWGHLLWVMPWMLFIL) traverse the membrane as a helical segment. The Cytoplasmic portion of the chain corresponds to 396-432 (QPAWQRIDSRLILIAQTLGWSRAKIFFYVKCPLMLRP). The helical transmembrane segment at 433–453 (VLIAFAVGFAVGIAQYMPTLW) threads the bilayer. Residues 454–485 (LGAGRFPTLTTEAVALSSGGSNGILAAQALWQ) lie on the Periplasmic side of the membrane. The chain crosses the membrane as a helical span at residues 486–506 (LLLPLIIFALTALVAKWVGYV). The Cytoplasmic segment spans residues 507 to 511 (RQGLR).

Belongs to the binding-protein-dependent transport system permease family.

It localises to the cell inner membrane. Probably part of the binding-protein-dependent transport system YnjCD. Probably responsible for the translocation of the substrate across the membrane. The sequence is that of Inner membrane ABC transporter permease protein YnjC (ynjC) from Escherichia coli (strain K12).